The chain runs to 198 residues: ATP-dependent Clp protease proteolytic subunit 2 (198 aa).

Ser101 (nucleophile) is an active-site residue. The active site involves His126.

Belongs to the peptidase S14 family. In terms of assembly, fourteen ClpP subunits assemble into 2 heptameric rings which stack back to back to give a disk-like structure with a central cavity, resembling the structure of eukaryotic proteasomes.

The protein localises to the cytoplasm. The catalysed reaction is Hydrolysis of proteins to small peptides in the presence of ATP and magnesium. alpha-casein is the usual test substrate. In the absence of ATP, only oligopeptides shorter than five residues are hydrolyzed (such as succinyl-Leu-Tyr-|-NHMec, and Leu-Tyr-Leu-|-Tyr-Trp, in which cleavage of the -Tyr-|-Leu- and -Tyr-|-Trp bonds also occurs).. In terms of biological role, cleaves peptides in various proteins in a process that requires ATP hydrolysis. Has a chymotrypsin-like activity. Plays a major role in the degradation of misfolded proteins. This Thermosynechococcus vestitus (strain NIES-2133 / IAM M-273 / BP-1) protein is ATP-dependent Clp protease proteolytic subunit 2.